Here is a 358-residue protein sequence, read N- to C-terminus: Peptide chain release factor 1 (358 aa).

Glutamine 237 carries the post-translational modification N5-methylglutamine. Over residues 291-309 (EESGYRKLAGHGDRSEKIR) the composition is skewed to basic and acidic residues. The tract at residues 291 to 313 (EESGYRKLAGHGDRSEKIRTYNY) is disordered.

This sequence belongs to the prokaryotic/mitochondrial release factor family. Methylated by PrmC. Methylation increases the termination efficiency of RF1.

It is found in the cytoplasm. Its function is as follows. Peptide chain release factor 1 directs the termination of translation in response to the peptide chain termination codons UAG and UAA. The sequence is that of Peptide chain release factor 1 from Mycoplasmopsis agalactiae (strain NCTC 10123 / CIP 59.7 / PG2) (Mycoplasma agalactiae).